A 351-amino-acid chain; its full sequence is Dihydroorotate dehydrogenase (quinone) (351 aa).

FMN-binding positions include 67-71 (AGFDK) and Thr-91. Lys-71 lines the substrate pocket. 116–120 (NAMGF) is a binding site for substrate. FMN is bound by residues Asn-145 and Asn-178. Residue Asn-178 participates in substrate binding. Ser-181 (nucleophile) is an active-site residue. A substrate-binding site is contributed by Asn-183. The FMN site is built by Lys-214 and Thr-242. Residue 243–244 (NT) coordinates substrate. Residues Gly-262, Gly-291, and 312 to 313 (YS) each bind FMN.

The protein belongs to the dihydroorotate dehydrogenase family. Type 2 subfamily. As to quaternary structure, monomer. The cofactor is FMN.

It localises to the cell membrane. The enzyme catalyses (S)-dihydroorotate + a quinone = orotate + a quinol. Its pathway is pyrimidine metabolism; UMP biosynthesis via de novo pathway; orotate from (S)-dihydroorotate (quinone route): step 1/1. Functionally, catalyzes the conversion of dihydroorotate to orotate with quinone as electron acceptor. In Helicobacter pylori (strain P12), this protein is Dihydroorotate dehydrogenase (quinone).